Reading from the N-terminus, the 172-residue chain is Ribosome maturation factor RimM (172 aa).

The region spanning 96–168 (DGEFYYHEII…RVQVELMEGL (73 aa)) is the PRC barrel domain.

Belongs to the RimM family. Binds ribosomal protein uS19.

It localises to the cytoplasm. An accessory protein needed during the final step in the assembly of 30S ribosomal subunit, possibly for assembly of the head region. Essential for efficient processing of 16S rRNA. May be needed both before and after RbfA during the maturation of 16S rRNA. It has affinity for free ribosomal 30S subunits but not for 70S ribosomes. This is Ribosome maturation factor RimM from Streptococcus agalactiae serotype Ia (strain ATCC 27591 / A909 / CDC SS700).